Consider the following 288-residue polypeptide: F420-non-reducing hydrogenase vhu subunit G (288 aa).

This sequence belongs to the [NiFe]/[NiFeSe] hydrogenase small subunit family. The F420-non-reducing hydrogenase vhu is composed of four subunits; VhuA, VhuD, VhuG and VhuU.

This chain is F420-non-reducing hydrogenase vhu subunit G (vhuG), found in Methanocaldococcus jannaschii (strain ATCC 43067 / DSM 2661 / JAL-1 / JCM 10045 / NBRC 100440) (Methanococcus jannaschii).